The primary structure comprises 157 residues: Cyclic pyranopterin monophosphate synthase (157 aa).

Substrate is bound by residues 74–76 and 112–113; these read MCH and ME. The active site involves Asp-127.

It belongs to the MoaC family. Homohexamer; trimer of dimers.

It catalyses the reaction (8S)-3',8-cyclo-7,8-dihydroguanosine 5'-triphosphate = cyclic pyranopterin phosphate + diphosphate. The protein operates within cofactor biosynthesis; molybdopterin biosynthesis. In terms of biological role, catalyzes the conversion of (8S)-3',8-cyclo-7,8-dihydroguanosine 5'-triphosphate to cyclic pyranopterin monophosphate (cPMP). This chain is Cyclic pyranopterin monophosphate synthase, found in Campylobacter jejuni subsp. doylei (strain ATCC BAA-1458 / RM4099 / 269.97).